Reading from the N-terminus, the 199-residue chain is Large ribosomal subunit protein bL25 (199 aa).

This sequence belongs to the bacterial ribosomal protein bL25 family. CTC subfamily. In terms of assembly, part of the 50S ribosomal subunit; part of the 5S rRNA/L5/L18/L25 subcomplex. Contacts the 5S rRNA. Binds to the 5S rRNA independently of L5 and L18.

In terms of biological role, this is one of the proteins that binds to the 5S RNA in the ribosome where it forms part of the central protuberance. In Pseudomonas fluorescens (strain ATCC BAA-477 / NRRL B-23932 / Pf-5), this protein is Large ribosomal subunit protein bL25.